Consider the following 174-residue polypeptide: Large ribosomal subunit protein uL10 (174 aa).

The protein belongs to the universal ribosomal protein uL10 family. As to quaternary structure, part of the ribosomal stalk of the 50S ribosomal subunit. The N-terminus interacts with L11 and the large rRNA to form the base of the stalk. The C-terminus forms an elongated spine to which L12 dimers bind in a sequential fashion forming a multimeric L10(L12)X complex.

In terms of biological role, forms part of the ribosomal stalk, playing a central role in the interaction of the ribosome with GTP-bound translation factors. The polypeptide is Large ribosomal subunit protein uL10 (Geobacter sulfurreducens (strain ATCC 51573 / DSM 12127 / PCA)).